The following is a 456-amino-acid chain: Bifunctional protein GlmU (456 aa).

The pyrophosphorylase stretch occupies residues 1–229; sequence MLNSAMSVVI…ISETDGVNNR (229 aa). UDP-N-acetyl-alpha-D-glucosamine-binding positions include 11 to 14, lysine 25, glutamine 76, 81 to 82, 103 to 105, glycine 140, glutamate 154, asparagine 169, and asparagine 227; these read LAAG, GT, and YGD. Aspartate 105 is a Mg(2+) binding site. Mg(2+) is bound at residue asparagine 227. Residues 230 to 250 are linker; the sequence is LQLSRLERIYQAEQAEKLLLS. The segment at 251–456 is N-acetyltransferase; that stretch reads GVMLRDPARF…QGWQRPVKKK (206 aa). UDP-N-acetyl-alpha-D-glucosamine contacts are provided by arginine 333 and lysine 351. The active-site Proton acceptor is histidine 363. UDP-N-acetyl-alpha-D-glucosamine contacts are provided by tyrosine 366 and asparagine 377. Acetyl-CoA contacts are provided by residues alanine 380, 386–387, serine 405, alanine 423, and arginine 440; that span reads NY.

The protein in the N-terminal section; belongs to the N-acetylglucosamine-1-phosphate uridyltransferase family. In the C-terminal section; belongs to the transferase hexapeptide repeat family. Homotrimer. The cofactor is Mg(2+).

It is found in the cytoplasm. The enzyme catalyses alpha-D-glucosamine 1-phosphate + acetyl-CoA = N-acetyl-alpha-D-glucosamine 1-phosphate + CoA + H(+). The catalysed reaction is N-acetyl-alpha-D-glucosamine 1-phosphate + UTP + H(+) = UDP-N-acetyl-alpha-D-glucosamine + diphosphate. It functions in the pathway nucleotide-sugar biosynthesis; UDP-N-acetyl-alpha-D-glucosamine biosynthesis; N-acetyl-alpha-D-glucosamine 1-phosphate from alpha-D-glucosamine 6-phosphate (route II): step 2/2. The protein operates within nucleotide-sugar biosynthesis; UDP-N-acetyl-alpha-D-glucosamine biosynthesis; UDP-N-acetyl-alpha-D-glucosamine from N-acetyl-alpha-D-glucosamine 1-phosphate: step 1/1. Its pathway is bacterial outer membrane biogenesis; LPS lipid A biosynthesis. Catalyzes the last two sequential reactions in the de novo biosynthetic pathway for UDP-N-acetylglucosamine (UDP-GlcNAc). The C-terminal domain catalyzes the transfer of acetyl group from acetyl coenzyme A to glucosamine-1-phosphate (GlcN-1-P) to produce N-acetylglucosamine-1-phosphate (GlcNAc-1-P), which is converted into UDP-GlcNAc by the transfer of uridine 5-monophosphate (from uridine 5-triphosphate), a reaction catalyzed by the N-terminal domain. This is Bifunctional protein GlmU from Salmonella heidelberg (strain SL476).